We begin with the raw amino-acid sequence, 206 residues long: Protease (206 aa).

Active-site residues include H55, D72, and C122.

Belongs to the peptidase C5 family. In terms of assembly, interacts with protease cofactor pVI-C; this interaction is necessary for protease activation.

Its subcellular location is the virion. The protein localises to the host nucleus. It catalyses the reaction Cleaves proteins of the adenovirus and its host cell at two consensus sites: -Yaa-Xaa-Gly-Gly-|-Xaa- and -Yaa-Xaa-Gly-Xaa-|-Gly- (in which Yaa is Met, Ile or Leu, and Xaa is any amino acid).. With respect to regulation, requires DNA and protease cofactor for maximal activation. Inside nascent virions, becomes partially activated by binding to the viral DNA, allowing it to cleave the cofactor that binds to the protease and fully activates it. Actin, like the viral protease cofactor, seems to act as a cofactor in the cleavage of cytokeratin 18 and of actin itself. Its function is as follows. Cleaves viral precursor proteins (pTP, pIIIa, pVI, pVII, pVIII, and pX) inside newly assembled particles giving rise to mature virions. Protease complexed to its cofactor slides along the viral DNA to specifically locate and cleave the viral precursors. Mature virions have a weakened organization compared to the unmature virions, thereby facilitating subsequent uncoating. Without maturation, the particle lacks infectivity and is unable to uncoat. Late in adenovirus infection, in the cytoplasm, may participate in the cytoskeleton destruction. Cleaves host cell cytoskeletal keratins K7 and K18. This chain is Protease, found in Fowl adenovirus A serotype 1 (strain CELO / Phelps) (FAdV-1).